We begin with the raw amino-acid sequence, 305 residues long: Transmembrane epididymal protein 1A (305 aa).

The chain crosses the membrane as a helical span at residues 4–24; that stretch reads FIGHISPGLFLVFYGLYQAVI. An N-linked (GlcNAc...) asparagine glycan is attached at asparagine 32. The next 5 helical transmembrane spans lie at 54 to 74, 124 to 144, 159 to 179, 187 to 207, and 223 to 243; these read IAHAGWLKVVIGSLLIVYEIS, CVLLERGATVLGVYVLLLLLV, SLLILVVFLLMLVLTAELWAP, IETFLILIMGSWLIQAAFILF, and IMFVTTFFCWHVMINALCMLG. A disordered region spans residues 285-305; sequence EQQDKDDQAPLLSKISPCDRA.

This sequence belongs to the TMEM45 family.

Its subcellular location is the membrane. This Mus musculus (Mouse) protein is Transmembrane epididymal protein 1A.